The chain runs to 1024 residues: Error-prone DNA polymerase (1024 aa).

This sequence belongs to the DNA polymerase type-C family. DnaE2 subfamily.

The protein localises to the cytoplasm. The catalysed reaction is DNA(n) + a 2'-deoxyribonucleoside 5'-triphosphate = DNA(n+1) + diphosphate. DNA polymerase involved in damage-induced mutagenesis and translesion synthesis (TLS). It is not the major replicative DNA polymerase. The chain is Error-prone DNA polymerase from Vibrio campbellii (strain ATCC BAA-1116).